The sequence spans 274 residues: Shikimate dehydrogenase (NADP(+)) (274 aa).

Residues 14-16 and Thr61 each bind shikimate; that span reads SQS. The active-site Proton acceptor is the Lys65. Residues Asn86 and Asp102 each contribute to the shikimate site. NADP(+) is bound by residues 128-132, 151-156, and Leu215; these read GAGGA and NRTVEK. A shikimate-binding site is contributed by Tyr217. Gly239 lines the NADP(+) pocket.

Belongs to the shikimate dehydrogenase family. In terms of assembly, homodimer.

It catalyses the reaction shikimate + NADP(+) = 3-dehydroshikimate + NADPH + H(+). The protein operates within metabolic intermediate biosynthesis; chorismate biosynthesis; chorismate from D-erythrose 4-phosphate and phosphoenolpyruvate: step 4/7. Its function is as follows. Involved in the biosynthesis of the chorismate, which leads to the biosynthesis of aromatic amino acids. Catalyzes the reversible NADPH linked reduction of 3-dehydroshikimate (DHSA) to yield shikimate (SA). In Proteus mirabilis (strain HI4320), this protein is Shikimate dehydrogenase (NADP(+)).